A 179-amino-acid polypeptide reads, in one-letter code: ADP-ribosylation factor-like protein 5A (179 aa).

A lipid anchor (N-myristoyl glycine) is attached at G2. Residues 23 to 30 (GLDNAGKT), 66 to 70 (DIGGQ), 125 to 128 (NKQD), and A159 contribute to the GTP site.

It belongs to the small GTPase superfamily. Arf family. As to expression, low amounts were found in most tissues examined with highest levels in brain, intestine and thymus.

Lacks ADP-ribosylation enhancing activity. The protein is ADP-ribosylation factor-like protein 5A (Arl5a) of Rattus norvegicus (Rat).